We begin with the raw amino-acid sequence, 115 residues long: Migration and invasion enhancer 1 (115 aa).

Ser-2 is modified (N-acetylserine). Cys-30 and Cys-33 are disulfide-bonded. Residue Cys-112 is the site of S-geranylgeranyl cysteine attachment. Positions Val-113–Leu-115 are cleaved as a propeptide — removed in mature form.

Belongs to the SelWTH family. Interacts with GPX1. In terms of processing, isoprenylation facilitates association with the plasma membrane and enhances the migratory phenotype of cells by inducing increased filopodia formation. Widely expressed with highest levels in kidney followed by brain and testis.

It localises to the cytoplasm. Its subcellular location is the cytosol. The protein localises to the cell membrane. Its function is as follows. Increases cell migration by inducing filopodia formation at the leading edge of migrating cells. Plays a role in regulation of apoptosis, possibly through control of CASP3. May be involved in a redox-related process. In Mus musculus (Mouse), this protein is Migration and invasion enhancer 1 (Mien1).